A 240-amino-acid polypeptide reads, in one-letter code: Homeobox-leucine zipper protein HOX14 (240 aa).

The disordered stretch occupies residues 26–64; sequence SGEVQGERPRARRRRRRGARCVGGGGGGGEVDGGDPKKR. The segment covering 35 to 44 has biased composition (basic residues); sequence RARRRRRRGA. Positions 46 to 56 are enriched in gly residues; sequence CVGGGGGGGEV. Residues 59–118 constitute a DNA-binding region (homeobox); sequence GDPKKRRLSDEQVEMLELSFREERKLETGRKVHLASELGLDPKQVAVWFQNRRARHKSKL. A coiled-coil region spans residues 108 to 167; it reads QNRRARHKSKLLEEEFSKLKHAHDAAILHKCHLENEVLRLKERLVVAEEEVRRLRSAAGS.

It belongs to the HD-ZIP homeobox family. Class I subfamily. In terms of tissue distribution, expressed in roots, stems, leaf blades and panicles.

The protein localises to the nucleus. Functionally, probable transcription factor. The polypeptide is Homeobox-leucine zipper protein HOX14 (HOX14) (Oryza sativa subsp. japonica (Rice)).